A 302-amino-acid polypeptide reads, in one-letter code: Probable protein ABIL4 (302 aa).

Disordered regions lie at residues 151–179 (PSTGHKRTQAARLQTDNGQDSKPKPYPSA) and 220–256 (LLGKDIPASPMHKPLQPNGNTSFDAKKNVGSKDQPGF). The segment covering 161–170 (ARLQTDNGQD) has biased composition (polar residues).

This sequence belongs to the ABI family. In terms of assembly, binds SCAR.

It is found in the cytoplasm. The protein localises to the cytoskeleton. Involved in regulation of actin and microtubule organization. Part of a WAVE complex that activates the Arp2/3 complex. This chain is Probable protein ABIL4, found in Oryza sativa subsp. japonica (Rice).